The sequence spans 714 residues: Delta-like protein 1 (714 aa).

Positions methionine 1 to cysteine 17 are cleaved as a signal peptide. The Extracellular segment spans residues glutamine 18 to tryptophan 537. Residues phenylalanine 176–cysteine 220 form the DSL domain. 27 cysteine pairs are disulfide-bonded: cysteine 178-cysteine 187, cysteine 191-cysteine 203, cysteine 211-cysteine 220, cysteine 225-cysteine 236, cysteine 229-cysteine 242, cysteine 244-cysteine 253, cysteine 256-cysteine 267, cysteine 262-cysteine 273, cysteine 275-cysteine 284, cysteine 291-cysteine 303, cysteine 297-cysteine 313, cysteine 315-cysteine 324, cysteine 331-cysteine 342, cysteine 336-cysteine 351, cysteine 353-cysteine 362, cysteine 369-cysteine 380, cysteine 374-cysteine 390, cysteine 392-cysteine 401, cysteine 408-cysteine 419, cysteine 413-cysteine 428, cysteine 430-cysteine 439, cysteine 446-cysteine 457, cysteine 451-cysteine 466, cysteine 468-cysteine 477, cysteine 484-cysteine 495, cysteine 489-cysteine 504, and cysteine 506-cysteine 515. 3 consecutive EGF-like domains span residues cysteine 225 to cysteine 253, cysteine 256 to cysteine 284, and cysteine 291 to cysteine 324. Residues cysteine 331 to cysteine 362 enclose the EGF-like 4; calcium-binding domain. 2 EGF-like domains span residues cysteine 369 to cysteine 401 and cysteine 408 to cysteine 439. Positions cysteine 446–cysteine 477 constitute an EGF-like 7; calcium-binding domain. N-linked (GlcNAc...) asparagine glycosylation is present at asparagine 476. Positions cysteine 484–cysteine 515 constitute an EGF-like 8 domain. Residues valine 538–cysteine 560 traverse the membrane as a helical segment. Residues valine 561–valine 714 lie on the Cytoplasmic side of the membrane. A Glycyl lysine isopeptide (Lys-Gly) (interchain with G-Cter in ubiquitin) cross-link involves residue lysine 605. Threonine 630 is subject to Phosphothreonine. Basic and acidic residues predominate over residues alanine 644–lysine 656. The interval alanine 644–serine 690 is disordered. Serine 685 is subject to Phosphoserine; by PKB. Serine 688 is modified (phosphoserine). An interaction with MAGI1 region spans residues alanine 711 to valine 714.

Homodimer. Interacts with TJP1. Interacts with MAGI1 (via PDZ domain); forms a complex with CTNNB1 and CDH2 and promotes recruitment to the adherens junction and stabilization on the cell surface. Interacts with PSEN1; undergoes a presenilin-dependent gamma-secretase cleavage that releases a Dll1-intracellular form. Interacts with MFAP5. Interacts with MIB1. Interacts with NEURL1B; leads to ubiquitination. Interacts with NEURL1. Interacts with SYNJ2BP; enhances DLL1 protein stability, and promotes Notch signaling in endothelial cells. Interacts with MAGI1, MAGI2, MAGI3 and MPDZ. Interacts (via ubiquitin) with EPN1 (via IUM domain); binding with NOTCH1 attached to neighboring cell, promotes ligand ubiquitination and EPN1 interaction, leading to NECD transendocytosis and Notch signaling. Interacts with NOTCH1. Ubiquitinated by MIB (MIB1 or MIB2), leading to its endocytosis and subsequent degradation. Ubiquitinated; promotes recycling back to the plasma membrane and confers a strong affinity for NOTCH1. Mono- and multi-ubiquitinated. Multi-ubiquitination of Lys-605 by MIB1 promotes both cis and trans-interaction with NOTCH1, as well as activation of Notch signaling. Ubiquitinated by NEURL1B. Post-translationally, phosphorylated in a membrane association-dependent manner. Phosphorylation at Ser-688 requires the presence of Ser-685, whereas phosphorylation at Thr-630 and Ser-685 occur independently of the other sites. Phosphorylation is required for full ligand activity in vitro and affects surface presentation, ectodomain shedding, and endocytosis. In terms of processing, O-fucosylated. Can be elongated to a disaccharide by MFNG.

The protein localises to the apical cell membrane. Its subcellular location is the cell junction. The protein resides in the adherens junction. It localises to the membrane raft. Transmembrane ligand protein of NOTCH1, NOTCH2 and NOTCH3 receptors that binds the extracellular domain (ECD) of Notch receptor in a cis and trans fashion manner. Following transinteraction, ligand cells produce mechanical force that depends of a clathrin-mediated endocytosis, requiring ligand ubiquitination, EPN1 interaction, and actin polymerisation; these events promote Notch receptor extracellular domain (NECD) transendocytosis and triggers Notch signaling through induction of cleavage, hyperphosphorylation, and nuclear accumulation of the intracellular domain of Notch receptors (NICD). Is required for embryonic development and maintenance of adult stem cells in many different tissues and immune systeme; the DLL1-induced Notch signaling is mediated through an intercellular communication that regulates cell lineage, cell specification, cell patterning and morphogenesis through effects on differentiation and proliferation. Plays a role in brain development at different level, namely by regulating neuronal differentiation of neural precursor cells via cell-cell interaction, most likely through the lateral inhibitory system in an endogenous level dependent-manner. During neocortex development, Dll1-Notch signaling transmission is mediated by dynamic interactions between intermediate neurogenic progenitors and radial glia; the cell-cell interactions are mediated via dynamic and transient elongation processes, likely to reactivate/maintain Notch activity in neighboring progenitors, and coordinate progenitor cell division and differentiation across radial and zonal boundaries. During cerebellar development, regulates Bergmann glial monolayer formation and its morphological maturation through a Notch signaling pathway. At the retina and spinal cord level, regulates neurogenesis by preventing the premature differentiation of neural progenitors and also by maintaining progenitors in spinal cord through Notch signaling pathway. Also controls neurogenesis of the neural tube in a progenitor domain-specific fashion along the dorsoventral axis. Maintains quiescence of neural stem cells and plays a role as a fate determinant that segregates asymmetrically to one daughter cell during neural stem cells mitosis, resulting in neuronal differentiation in Dll1-inheriting cell. Plays a role in immune systeme development, namely the development of all T-cells and marginal zone (MZ) B cells. Blocks the differentiation of progenitor cells into the B-cell lineage while promoting the emergence of a population of cells with the characteristics of a T-cell/NK-cell precursor. Also plays a role during muscle development. During early development, inhibits myoblasts differentiation from the medial dermomyotomal lip and later regulates progenitor cell differentiation. Directly modulates cell adhesion and basal lamina formation in satellite cells through Notch signaling. Maintains myogenic progenitors pool by suppressing differentiation through down-regulation of MYOD1 and is required for satellite cell homing and PAX7 expression. During craniofacial and trunk myogenesis suppresses differentiation of cranial mesoderm-derived and somite-derived muscle via MYOD1 regulation but in cranial mesoderm-derived progenitors, is neither required for satellite cell homing nor for PAX7 expression. Also plays a role during pancreatic cell development. During type B pancreatic cell development, may be involved in the initiation of proximodistal patterning in the early pancreatic epithelium. Stimulates multipotent pancreatic progenitor cells proliferation and pancreatic growth by maintaining HES1 expression and PTF1A protein levels. During fetal stages of development, is required to maintain arterial identity and the responsiveness of arterial endothelial cells for VEGFA through regulation of KDR activation and NRP1 expression. Controls sprouting angiogenesis and subsequent vertical branch formation through regulation on tip cell differentiation. Negatively regulates goblet cell differentiation in intestine and controls secretory fat commitment through lateral inhibition in small intestine. Plays a role during inner ear development; negatively regulates auditory hair cell differentiation. Plays a role during nephron development through Notch signaling pathway. Regulates growth, blood pressure and energy homeostasis. This chain is Delta-like protein 1 (Dll1), found in Rattus norvegicus (Rat).